We begin with the raw amino-acid sequence, 100 residues long: Eukaryotic translation initiation factor 4E-binding protein 3 (100 aa).

Residues tyrosine 40–leucine 46 carry the YXXXXLphi motif motif. Residues leucine 81–isoleucine 100 are disordered. Residues glutamate 85–isoleucine 100 are compositionally biased toward acidic residues. The TOS motif motif lies at phenylalanine 96–isoleucine 100.

Belongs to the eIF4E-binding protein family. Interacts with EIF4E. Interacts with RPA2 (in unphosphorylated form via N-terminus); the interaction enhances EIF4EBP3-mediated inhibition of EIF4E-mediated mRNA nuclear export. Phosphorylated. Expression is highest in skeletal muscle, heart, kidney, and pancreas, whereas there is very little expression in brain and thymus.

The protein resides in the cytoplasm. It localises to the nucleus. In terms of biological role, repressor of translation initiation that regulates EIF4E activity by preventing its assembly into the eIF4F complex: the hypophosphorylated form competes with EIF4G1/EIF4G3 and strongly binds to EIF4E, leading to repression of translation. In contrast, the hyperphosphorylated form dissociates from EIF4E, allowing interaction between EIF4G1/EIF4G3 and EIF4E, leading to initiation of translation. Inhibits EIF4E-mediated mRNA nuclear export. In Homo sapiens (Human), this protein is Eukaryotic translation initiation factor 4E-binding protein 3 (EIF4EBP3).